The primary structure comprises 587 residues: Thiol:disulfide interchange protein DsbD 2 (587 aa).

The N-terminal stretch at 1-18 (MRVLILLLMLLLPGLSQA) is a signal peptide. At 19–172 (QPGDDLFAPR…SLQAGNLAWS (154 aa)) the chain is on the periplasmic side. Cystine bridges form between Cys-124–Cys-130 and Cys-188–Cys-308. Residues 173–193 (LLLFFGLGLLLAFAPCSLPML) traverse the membrane as a helical segment. The Cytoplasmic segment spans residues 194–216 (PILAGLVVGSGAGPRRGLLLAGS). Residues 217 to 237 (YVLSMALVYAGLGVVAALLGG) traverse the membrane as a helical segment. Over 238–246 (NLQAWLQQP) the chain is Periplasmic. A helical membrane pass occupies residues 247 to 267 (WLLGSFAALFVFLALPMFGFF). Residues 268–299 (ELQLPAALRDRLDGLSRGRKGGSLAGAAALGA) are Cytoplasmic-facing. Residues 300–320 (LSGLLVGPCMTAPLAGALLYI) traverse the membrane as a helical segment. Over 321–330 (AQTGNALHGG) the chain is Periplasmic. A helical transmembrane segment spans residues 331-351 (LVLFSLGLGIGMPLLLLVTVG). The Cytoplasmic segment spans residues 352–360 (SRFLPKPGP). The chain crosses the membrane as a helical span at residues 361–381 (WMNLVKGVFGFLFLGTAWILL). Residues 382–383 (RP) are Periplasmic-facing. A helical transmembrane segment spans residues 384 to 404 (LLGEALWIGLGGALLLVLAYA). Topologically, residues 405–416 (ALHTARGLARHA) are cytoplasmic. Residues 417–437 (VLFGAAGCIFGLWGAAMLLGA) traverse the membrane as a helical segment. The Periplasmic portion of the chain corresponds to 438 to 587 (AAGADDPWRP…AHWQATRERG (150 aa)). In terms of domain architecture, Thioredoxin spans 448 to 585 (LQVYAAANRG…FLAHWQATRE (138 aa)). Cys-500 and Cys-503 are oxidised to a cystine.

Belongs to the thioredoxin family. DsbD subfamily.

It localises to the cell inner membrane. The enzyme catalyses [protein]-dithiol + NAD(+) = [protein]-disulfide + NADH + H(+). It catalyses the reaction [protein]-dithiol + NADP(+) = [protein]-disulfide + NADPH + H(+). Its function is as follows. Required to facilitate the formation of correct disulfide bonds in some periplasmic proteins and for the assembly of the periplasmic c-type cytochromes. Acts by transferring electrons from cytoplasmic thioredoxin to the periplasm. This transfer involves a cascade of disulfide bond formation and reduction steps. This Pseudomonas aeruginosa (strain ATCC 15692 / DSM 22644 / CIP 104116 / JCM 14847 / LMG 12228 / 1C / PRS 101 / PAO1) protein is Thiol:disulfide interchange protein DsbD 2.